We begin with the raw amino-acid sequence, 1155 residues long: Cilia- and flagella-associated protein 251 (1155 aa).

Composition is skewed to basic and acidic residues over residues 1–19 (MSDAEEAPREATRENGETE) and 31–59 (KEVEDPQQESKDDTLAWRESQEEERKTGE). Disordered regions lie at residues 1 to 144 (MSDA…KLSL) and 167 to 225 (LDQI…DIQS). Over residues 60–69 (EEGEEEEEKE) the composition is skewed to acidic residues. The span at 70–95 (EEGKKDKKIVMEETEEKAGESQEKEA) shows a compositional bias: basic and acidic residues. Residues 99 to 111 (QEETTVEPQEVTE) are compositionally biased toward low complexity. 2 stretches are compositionally biased toward polar residues: residues 118–128 (TQITDSQSVTS) and 172–182 (PEEQQISSPER). Residues 201–220 (GQERRDLEPENREEGQERTV) show a composition bias toward basic and acidic residues. WD repeat units follow at residues 341-383 (PVHT…IWKW), 391-431 (ACTL…AWYE), 442-481 (LLTEKTFNKLVGKFSQSVFHLNLTQILSATMEGKLVVWDI), 499-534 (PCKLVHLQKEGITVLTTTDSYIVTGDIKGNIKFYDH), 537-597 (SIVN…VYHL), 601-641 (GTKL…VWNY), 647-684 (LFSRVFEKGLGVQSLTYNPEGALLGAGFTEGTVYILDA), 694-730 (PFKYSRTSVTHISFSHDSQYMATADRSFTVAVYMLVV), 737-780 (WEYL…GYDL), 791-831 (LDIH…LFNA), 837-883 (RKTL…ILPV), 889-927 (KTSAIVCHPNGVAGMAVSYDGHYAFTAGGHDRSVVQWKI), 965-1005 (YFYY…FYPS), and 1025-1065 (GKLI…GYTN).

Its subcellular location is the cytoplasm. The protein resides in the cytoskeleton. It localises to the cilium axoneme. It is found in the cell projection. The protein localises to the cilium. Its subcellular location is the flagellum. Involved in spermatozoa motility. May also regulate cilium motility through its role in the assembly of the axonemal radial spokes. The polypeptide is Cilia- and flagella-associated protein 251 (Pongo abelii (Sumatran orangutan)).